The following is a 51-amino-acid chain: Glutamate dehydrogenase (51 aa).

Residue K31 participates in substrate binding.

Belongs to the Glu/Leu/Phe/Val dehydrogenases family. Homohexamer.

The protein localises to the mitochondrion matrix. The catalysed reaction is L-glutamate + NAD(+) + H2O = 2-oxoglutarate + NH4(+) + NADH + H(+). It catalyses the reaction L-glutamate + NADP(+) + H2O = 2-oxoglutarate + NH4(+) + NADPH + H(+). Mitochondrial glutamate dehydrogenase that converts L-glutamate into alpha-ketoglutarate. Plays a key role in glutamine anaplerosis by producing alpha-ketoglutarate, an important intermediate in the tricarboxylic acid cycle. This chain is Glutamate dehydrogenase, found in Electrophorus electricus (Electric eel).